Reading from the N-terminus, the 116-residue chain is NADPH-dependent 7-cyano-7-deazaguanine reductase (116 aa).

The active-site Thioimide intermediate is the C31. The active-site Proton donor is D38. Substrate contacts are provided by residues 53-55 (VEL) and 72-73 (YE).

Belongs to the GTP cyclohydrolase I family. QueF type 1 subfamily.

The protein resides in the cytoplasm. The catalysed reaction is 7-aminomethyl-7-carbaguanine + 2 NADP(+) = 7-cyano-7-deazaguanine + 2 NADPH + 3 H(+). It functions in the pathway tRNA modification; tRNA-queuosine biosynthesis. Its function is as follows. Catalyzes the NADPH-dependent reduction of 7-cyano-7-deazaguanine (preQ0) to 7-aminomethyl-7-deazaguanine (preQ1). This is NADPH-dependent 7-cyano-7-deazaguanine reductase from Chlorobium phaeobacteroides (strain DSM 266 / SMG 266 / 2430).